Here is a 165-residue protein sequence, read N- to C-terminus: UPF0262 protein Sala_0765 (165 aa).

This sequence belongs to the UPF0262 family.

The protein is UPF0262 protein Sala_0765 of Sphingopyxis alaskensis (strain DSM 13593 / LMG 18877 / RB2256) (Sphingomonas alaskensis).